A 595-amino-acid chain; its full sequence is Actin-histidine N-methyltransferase (595 aa).

The tract at residues 1-22 (MGKKSRVKTQKSGTGATATVSP) is disordered. A compositionally biased stretch (polar residues) spans 10 to 20 (QKSGTGATATV). Residues Arg-75, 104 to 106 (EGF), Arg-254, 275 to 279 (DMCNH), and 325 to 327 (SGF) each bind S-adenosyl-L-methionine. Residues 94–314 (EGFEMVNFKE…AGEQIYIFYG (221 aa)) form the SET domain. At Ser-513 the chain carries Phosphoserine. Over residues 549–572 (ENGLVNGENSVPNGTRSENENLNQ) the composition is skewed to polar residues. Residues 549-595 (ENGLVNGENSVPNGTRSENENLNQEESKRAVEDAKGSSSDNTAEVKE) form a disordered region. Basic and acidic residues predominate over residues 573–583 (EESKRAVEDAK). Polar residues predominate over residues 584–595 (GSSSDNTAEVKE).

It belongs to the class V-like SAM-binding methyltransferase superfamily. SETD3 actin-histidine methyltransferase family. In terms of assembly, interacts with MYOD1. In terms of processing, phosphorylated by GSK3B, which is required for recognition by the SCF(FBXW7) complex and subsequent degradation. Ubiquitinated by the SCF(FBXW7) complex following phosphorylation by GSK3B, leading to its degradation by the proteasome.

The protein localises to the cytoplasm. Its subcellular location is the nucleus. It catalyses the reaction L-histidyl-[protein] + S-adenosyl-L-methionine = N(tele)-methyl-L-histidyl-[protein] + S-adenosyl-L-homocysteine + H(+). Its function is as follows. Protein-histidine N-methyltransferase that specifically mediates 3-methylhistidine (tele-methylhistidine) methylation of actin at 'His-73'. Histidine methylation of actin is required for smooth muscle contraction of the laboring uterus during delivery. Does not have protein-lysine N-methyltransferase activity and probably only catalyzes histidine methylation of actin. This chain is Actin-histidine N-methyltransferase, found in Papio anubis (Olive baboon).